A 383-amino-acid polypeptide reads, in one-letter code: Histidine decarboxylase (383 aa).

Position 120 (His-120) interacts with substrate. Lys-233 is modified (N6-(pyridoxal phosphate)lysine).

Belongs to the group II decarboxylase family. Homotetramer. It depends on pyridoxal 5'-phosphate as a cofactor.

It catalyses the reaction L-histidine + H(+) = histamine + CO2. The protein is Histidine decarboxylase of Acinetobacter baumannii (strain ACICU).